The chain runs to 979 residues: UPF0182 protein MRA_0066 (979 aa).

7 consecutive transmembrane segments (helical) span residues 19 to 39 (LVTA…LVDI), 63 to 83 (LAIV…ALLL), 114 to 134 (LFGW…ASFD), 174 to 194 (WLFV…YLFG), 211 to 231 (VQLA…YWLD), 260 to 280 (KLVL…AIFL), and 288 to 308 (MAAA…PLLM). The interval 898–948 (GTGRVATARGGDAASAPPPGAGGPAPPQAVPPPRTTQPPAAPPRGPDVPPA) is disordered. The span at 913–946 (APPPGAGGPAPPQAVPPPRTTQPPAAPPRGPDVP) shows a compositional bias: pro residues.

Belongs to the UPF0182 family.

The protein localises to the cell membrane. The chain is UPF0182 protein MRA_0066 from Mycobacterium tuberculosis (strain ATCC 25177 / H37Ra).